Reading from the N-terminus, the 256-residue chain is Ubiquinone/menaquinone biosynthesis C-methyltransferase UbiE (256 aa).

Residues Thr-79, Asp-100, and 128 to 129 (DA) each bind S-adenosyl-L-methionine.

It belongs to the class I-like SAM-binding methyltransferase superfamily. MenG/UbiE family.

It catalyses the reaction a 2-demethylmenaquinol + S-adenosyl-L-methionine = a menaquinol + S-adenosyl-L-homocysteine + H(+). It carries out the reaction a 2-methoxy-6-(all-trans-polyprenyl)benzene-1,4-diol + S-adenosyl-L-methionine = a 5-methoxy-2-methyl-3-(all-trans-polyprenyl)benzene-1,4-diol + S-adenosyl-L-homocysteine + H(+). Its pathway is quinol/quinone metabolism; menaquinone biosynthesis; menaquinol from 1,4-dihydroxy-2-naphthoate: step 2/2. It participates in cofactor biosynthesis; ubiquinone biosynthesis. Functionally, methyltransferase required for the conversion of demethylmenaquinol (DMKH2) to menaquinol (MKH2) and the conversion of 2-polyprenyl-6-methoxy-1,4-benzoquinol (DDMQH2) to 2-polyprenyl-3-methyl-6-methoxy-1,4-benzoquinol (DMQH2). The sequence is that of Ubiquinone/menaquinone biosynthesis C-methyltransferase UbiE from Pseudomonas paraeruginosa (strain DSM 24068 / PA7) (Pseudomonas aeruginosa (strain PA7)).